Consider the following 182-residue polypeptide: Prorelaxin (182 aa).

The N-terminal stretch at 1-24 is a signal peptide; sequence MPRLFSYLLGVWLLLSQLPREIPG. Q25 carries the pyrrolidone carboxylic acid modification. 3 disulfide bridges follow: C34-C169, C46-C182, and C168-C173. Positions 57-154 are cleaved as a propeptide — connecting peptide; sequence SLEEPQLETG…LKNLGLDKHS (98 aa). Positions 159–160 are excised as a propeptide; sequence LF.

Belongs to the insulin family. As to quaternary structure, heterodimer of a B chain and an A chain linked by two disulfide bonds.

Its subcellular location is the secreted. Relaxin is an ovarian hormone that acts with estrogen to produce dilatation of the birth canal in many mammals. The protein is Prorelaxin (RLN) of Sus scrofa (Pig).